Here is a 256-residue protein sequence, read N- to C-terminus: Late embryogenesis abundant protein 32 (256 aa).

Basic and acidic residues predominate over residues Met-1 to Lys-14. The tract at residues Met-1–Glu-20 is disordered. Residues Gln-5–Pro-9 carry the Nuclear localization signal (NLS) motif. SMP domains are found at residues Val-13–Ile-66, Ile-130–Thr-187, and Ile-195–Arg-253.

The protein belongs to the LEA type SMP family. As to expression, embryo specific, only in dry mature seeds. Expressed at low levels.

Its subcellular location is the cytoplasm. The protein resides in the nucleus. LEA proteins are late embryonic proteins abundant in higher plant seed embryos. The function of those proteins is not known. The protein is Late embryogenesis abundant protein 32 of Arabidopsis thaliana (Mouse-ear cress).